Here is a 117-residue protein sequence, read N- to C-terminus: Large ribosomal subunit protein bL19 (117 aa).

This sequence belongs to the bacterial ribosomal protein bL19 family.

Functionally, this protein is located at the 30S-50S ribosomal subunit interface and may play a role in the structure and function of the aminoacyl-tRNA binding site. The chain is Large ribosomal subunit protein bL19 from Rhodopirellula baltica (strain DSM 10527 / NCIMB 13988 / SH1).